The following is a 179-amino-acid chain: Replication restart protein DnaT (179 aa).

A disordered region spans residues 156-179 (GGLPKRDVNTVSEPDSQIPPGFRG).

It belongs to the DnaT family. In terms of assembly, homooligomerizes. Interacts with PriB. Component of the replication restart primosome. Primosome assembly occurs via a 'hand-off' mechanism. PriA binds to replication forks, subsequently PriB then DnaT bind; DnaT then displaces ssDNA to generate the helicase loading substrate.

Its function is as follows. Involved in the restart of stalled replication forks, which reloads the replicative helicase on sites other than the origin of replication. Can function in multiple replication restart pathways. Displaces ssDNA from a PriB-ssDNA complex. Probably forms a spiral filament on ssDNA. In Escherichia coli O81 (strain ED1a), this protein is Replication restart protein DnaT.